The chain runs to 419 residues: MMFNNENYKDYDQELWEAIQAEEDRQEHNIELIASENMVSKAVMQAQGSVLTNKYAEGYPSKRYYGGTEYVDIVESLAIERAKKLFGAAYANVQPHSGSQANAAAYMALINAGDTVLGMDLAAGGHLTHGSPVNFSGKTYQFVGYTVDKETEKLDYAAILKQAKAVQPKLIVAGASAYSRKIDFEQFRFIADQVGAYLMVDMAHIAGLVAAGLHQNPVPYAHIVTSTTHKTLRGPRGGLLLTNDEAIARKMNAAIFPGLQGGPLEHVIAAKAVAFKEALDPAFTDYARAVIANTAAMAEVFAKDDRFRLISGGTDNHLFLVDVTKVIENGKLAQALLDEVNITLNKNAIPFETLSPFKTSGIRIGCAAITSRGMGVDESRTIAHLIIKTLVNHQQPEILEEVRYEVRRLTDAFPLYKKN.

(6S)-5,6,7,8-tetrahydrofolate is bound by residues L121 and G125 to L127. K230 is subject to N6-(pyridoxal phosphate)lysine. Position 355 to 357 (S355 to F357) interacts with (6S)-5,6,7,8-tetrahydrofolate.

Belongs to the SHMT family. In terms of assembly, homodimer. The cofactor is pyridoxal 5'-phosphate.

The protein resides in the cytoplasm. It catalyses the reaction (6R)-5,10-methylene-5,6,7,8-tetrahydrofolate + glycine + H2O = (6S)-5,6,7,8-tetrahydrofolate + L-serine. The protein operates within one-carbon metabolism; tetrahydrofolate interconversion. It participates in amino-acid biosynthesis; glycine biosynthesis; glycine from L-serine: step 1/1. Functionally, catalyzes the reversible interconversion of serine and glycine with tetrahydrofolate (THF) serving as the one-carbon carrier. This reaction serves as the major source of one-carbon groups required for the biosynthesis of purines, thymidylate, methionine, and other important biomolecules. Also exhibits THF-independent aldolase activity toward beta-hydroxyamino acids, producing glycine and aldehydes, via a retro-aldol mechanism. The polypeptide is Serine hydroxymethyltransferase (Streptococcus equi subsp. zooepidemicus (strain MGCS10565)).